The primary structure comprises 182 residues: Ribosome maturation factor RimM (182 aa).

Positions 101-174 (QDEYFIHQLY…QIVVRLLPGL (74 aa)) constitute a PRC barrel domain.

This sequence belongs to the RimM family. As to quaternary structure, binds ribosomal protein uS19.

It localises to the cytoplasm. Functionally, an accessory protein needed during the final step in the assembly of 30S ribosomal subunit, possibly for assembly of the head region. Essential for efficient processing of 16S rRNA. May be needed both before and after RbfA during the maturation of 16S rRNA. It has affinity for free ribosomal 30S subunits but not for 70S ribosomes. The protein is Ribosome maturation factor RimM of Roseiflexus sp. (strain RS-1).